A 461-amino-acid chain; its full sequence is Asparagine--tRNA ligase (461 aa).

This sequence belongs to the class-II aminoacyl-tRNA synthetase family. In terms of assembly, homodimer.

The protein resides in the cytoplasm. The enzyme catalyses tRNA(Asn) + L-asparagine + ATP = L-asparaginyl-tRNA(Asn) + AMP + diphosphate + H(+). The protein is Asparagine--tRNA ligase of Nitratidesulfovibrio vulgaris (strain DP4) (Desulfovibrio vulgaris).